The sequence spans 355 residues: LIM/homeobox protein lim-4 (355 aa).

2 LIM zinc-binding domains span residues 96 to 155 (VICT…THVT) and 166 to 228 (PKCA…LVEG). A DNA-binding region (homeobox) is located at residues 239-298 (TKRVRTTFAEDQLSVLQTYFNRDSNPDGADLEKIASMTGLSKRVTQVWFQNSRARQKKWH). The tract at residues 291-336 (RARQKKWHQKSEGDNGDSQRSSVGPSSPSQKSDSSSEMMYPTSVTT) is disordered. Low complexity predominate over residues 306–326 (GDSQRSSVGPSSPSQKSDSSS).

Interacts with transcription factor sox-2. As to expression, expressed in the AWB sensory neurons and in one RME motor neuron (RMEV), two RMD motor neurons (RMDL and RMDR), the RID, RIV, SAA and SIA interneurons and the SMB sensory/inter/motor neurons.

It localises to the nucleus. In terms of biological role, transcription factor that binds to the promoter of target genes. Regulates genes involved in serotonin synthesis and release in serotonergic ADF neurons. Involved in specification of neuron cell fate, olfactory receptor expression, locomotion, and foraging behavior. Required in AWB olfactory neurons to repress AWC cell fate and promote the AWB cell fate during early development. Cooperates with additional factors to direct the differentiation of the olfactory neurons, functioning with the transcription factor sox-2 to suppress AWC terminal differentiation and promote AWB neuron differentiation. Involved in regulating terminal specification and maintenance of the SMB sensory/inter/motor neurons. Plays a role in regulation of RID motor neuron differentiation, but is dispensable for motor axon outgrowth in the dorsal nerve cord. May regulate its own expression. This is LIM/homeobox protein lim-4 from Caenorhabditis elegans.